The sequence spans 231 residues: Large ribosomal subunit protein uL1 (231 aa).

This sequence belongs to the universal ribosomal protein uL1 family. In terms of assembly, part of the 50S ribosomal subunit.

Its function is as follows. Binds directly to 23S rRNA. The L1 stalk is quite mobile in the ribosome, and is involved in E site tRNA release. Protein L1 is also a translational repressor protein, it controls the translation of the L11 operon by binding to its mRNA. The sequence is that of Large ribosomal subunit protein uL1 from Herminiimonas arsenicoxydans.